The primary structure comprises 330 residues: Ferredoxin--NADP reductase (330 aa).

Residues E35, Q43, Y48, V90, F123, D285, and T326 each contribute to the FAD site.

The protein belongs to the ferredoxin--NADP reductase type 2 family. In terms of assembly, homodimer. It depends on FAD as a cofactor.

The catalysed reaction is 2 reduced [2Fe-2S]-[ferredoxin] + NADP(+) + H(+) = 2 oxidized [2Fe-2S]-[ferredoxin] + NADPH. In Streptococcus pyogenes serotype M28 (strain MGAS6180), this protein is Ferredoxin--NADP reductase.